A 496-amino-acid chain; its full sequence is Aspartyl/glutamyl-tRNA(Asn/Gln) amidotransferase subunit B (496 aa).

Belongs to the GatB/GatE family. GatB subfamily. In terms of assembly, heterotrimer of A, B and C subunits.

It carries out the reaction L-glutamyl-tRNA(Gln) + L-glutamine + ATP + H2O = L-glutaminyl-tRNA(Gln) + L-glutamate + ADP + phosphate + H(+). The enzyme catalyses L-aspartyl-tRNA(Asn) + L-glutamine + ATP + H2O = L-asparaginyl-tRNA(Asn) + L-glutamate + ADP + phosphate + 2 H(+). Allows the formation of correctly charged Asn-tRNA(Asn) or Gln-tRNA(Gln) through the transamidation of misacylated Asp-tRNA(Asn) or Glu-tRNA(Gln) in organisms which lack either or both of asparaginyl-tRNA or glutaminyl-tRNA synthetases. The reaction takes place in the presence of glutamine and ATP through an activated phospho-Asp-tRNA(Asn) or phospho-Glu-tRNA(Gln). The sequence is that of Aspartyl/glutamyl-tRNA(Asn/Gln) amidotransferase subunit B from Xanthobacter autotrophicus (strain ATCC BAA-1158 / Py2).